Here is a 443-residue protein sequence, read N- to C-terminus: Tol-Pal system protein TolB (443 aa).

Residues 1–33 form the signal peptide; it reads MKIGIINTKIRTVFSAFACMIAASLVCTMPARA.

It belongs to the TolB family. As to quaternary structure, the Tol-Pal system is composed of five core proteins: the inner membrane proteins TolA, TolQ and TolR, the periplasmic protein TolB and the outer membrane protein Pal. They form a network linking the inner and outer membranes and the peptidoglycan layer.

It is found in the periplasm. Its function is as follows. Part of the Tol-Pal system, which plays a role in outer membrane invagination during cell division and is important for maintaining outer membrane integrity. This Brucella ovis (strain ATCC 25840 / 63/290 / NCTC 10512) protein is Tol-Pal system protein TolB.